We begin with the raw amino-acid sequence, 239 residues long: MFTGLVEHIGTVLQVTEKDTTASGGDGVSMVIGDCSKILEDVQLGDSICTNGVCLTVTEFDMARSQFKVGISPETLRRSDLGELKPGSKVNLERAVKADVRMGGHVVQGHVDTIATIVNRRGDGNAINFTFKLRDSQYGKYIVEKGFIAIDGTSLTVTDVDHEQSEFSISMVSYTQEKVIMPLKNSGDSVNIEVDLTGKLIEKQIELSLLSYIKDETSPLSTLIGKLVEKKVDDVLKRN.

2 Lumazine-binding repeats span residues 1 to 105 (MFTG…MGGH) and 106 to 205 (VVQG…EKQI). 2,4-dihydroxypteridine is bound by residues 4-6 (GLV), 54-56 (CLT), 70-75 (GISPET), 109-111 (GHV), Lys-145, 154-156 (SLT), and 170-175 (SMVSYT).

Homotrimer.

The catalysed reaction is 2 6,7-dimethyl-8-(1-D-ribityl)lumazine + H(+) = 5-amino-6-(D-ribitylamino)uracil + riboflavin. The protein operates within cofactor biosynthesis; riboflavin biosynthesis; riboflavin from 2-hydroxy-3-oxobutyl phosphate and 5-amino-6-(D-ribitylamino)uracil: step 2/2. Functionally, catalyzes the dismutation of two molecules of 6,7-dimethyl-8-ribityllumazine, resulting in the formation of riboflavin and 5-amino-6-(D-ribitylamino)uracil. The sequence is that of Riboflavin synthase (RIB5) from Meyerozyma guilliermondii (strain ATCC 6260 / CBS 566 / DSM 6381 / JCM 1539 / NBRC 10279 / NRRL Y-324) (Yeast).